The chain runs to 136 residues: MTERTLVLIKPDGVQRRLIGEIISRIEAKGLTVAALELKNVDDALARAHYAEHEGKPFFASLLEFITSGPVVAAILEGPRAIAAFRQLAGGTDPVEKATPGTIRGDLGLETQFNLVHGSDSPDSAAREIELWFPGR.

ATP-binding residues include Lys10, Phe58, Arg86, Thr92, Arg104, and Asn114. Residue His117 is the Pros-phosphohistidine intermediate of the active site.

It belongs to the NDK family. As to quaternary structure, homotetramer. Requires Mg(2+) as cofactor.

Its subcellular location is the cytoplasm. The catalysed reaction is a 2'-deoxyribonucleoside 5'-diphosphate + ATP = a 2'-deoxyribonucleoside 5'-triphosphate + ADP. The enzyme catalyses a ribonucleoside 5'-diphosphate + ATP = a ribonucleoside 5'-triphosphate + ADP. Its function is as follows. Major role in the synthesis of nucleoside triphosphates other than ATP. The ATP gamma phosphate is transferred to the NDP beta phosphate via a ping-pong mechanism, using a phosphorylated active-site intermediate. In Mycolicibacterium vanbaalenii (strain DSM 7251 / JCM 13017 / BCRC 16820 / KCTC 9966 / NRRL B-24157 / PYR-1) (Mycobacterium vanbaalenii), this protein is Nucleoside diphosphate kinase.